A 90-amino-acid polypeptide reads, in one-letter code: Small ribosomal subunit protein bS16 (90 aa).

The protein belongs to the bacterial ribosomal protein bS16 family.

This is Small ribosomal subunit protein bS16 from Streptococcus pneumoniae serotype 19F (strain G54).